A 126-amino-acid chain; its full sequence is Protein ApaG (126 aa).

Residues 2 to 126 form the ApaG domain; sequence SQLTSSVRVD…FRLSIPGLLH (125 aa).

This is Protein ApaG from Shewanella halifaxensis (strain HAW-EB4).